Reading from the N-terminus, the 328-residue chain is NADH-quinone oxidoreductase subunit H (328 aa).

8 consecutive transmembrane segments (helical) span residues 8–28, 81–101, 114–134, 154–174, 186–206, 237–257, 265–285, and 304–324; these read VAAIAFALFQAVVILLAAVGA, GLFVLAPAIAMASLLLSFMVI, IGLLFFFAMAGINVYAVLFAG, LSYEVFMGLSLMGVVAMAGSF, LWFIVPQFFGFCTFLVAGIAV, FFVGEYVGIVLVSALMVTLFL, LPPIVWFLLKTAVFVGFFILL, and VCLPLTLINLLVTGALILIFS.

Belongs to the complex I subunit 1 family. As to quaternary structure, NDH-1 is composed of 14 different subunits. Subunits NuoA, H, J, K, L, M, N constitute the membrane sector of the complex.

Its subcellular location is the cell inner membrane. It carries out the reaction a quinone + NADH + 5 H(+)(in) = a quinol + NAD(+) + 4 H(+)(out). In terms of biological role, NDH-1 shuttles electrons from NADH, via FMN and iron-sulfur (Fe-S) centers, to quinones in the respiratory chain. The immediate electron acceptor for the enzyme in this species is believed to be ubiquinone. Couples the redox reaction to proton translocation (for every two electrons transferred, four hydrogen ions are translocated across the cytoplasmic membrane), and thus conserves the redox energy in a proton gradient. This subunit may bind ubiquinone. The sequence is that of NADH-quinone oxidoreductase subunit H from Chromohalobacter salexigens (strain ATCC BAA-138 / DSM 3043 / CIP 106854 / NCIMB 13768 / 1H11).